Reading from the N-terminus, the 802-residue chain is Sucrose synthase 1 (802 aa).

Residues 272–749 (MMFNVVILSP…GLQRIYEKYT (478 aa)) form a GT-B glycosyltransferase region.

This sequence belongs to the glycosyltransferase 1 family. Plant sucrose synthase subfamily.

It carries out the reaction an NDP-alpha-D-glucose + D-fructose = a ribonucleoside 5'-diphosphate + sucrose + H(+). Sucrose-cleaving enzyme that provides UDP-glucose and fructose for various metabolic pathways. Most active in the sink tissues where it is responsible for the breakdown of the arriving sucrose. The sequence is that of Sucrose synthase 1 (SH-1) from Zea mays (Maize).